The sequence spans 311 residues: tRNA-cytidine(32) 2-sulfurtransferase (311 aa).

A PP-loop motif motif is present at residues 47-52; the sequence is SGGKDS. Cysteine 122, cysteine 125, and cysteine 213 together coordinate [4Fe-4S] cluster.

It belongs to the TtcA family. Homodimer. Requires Mg(2+) as cofactor. It depends on [4Fe-4S] cluster as a cofactor.

The protein resides in the cytoplasm. The enzyme catalyses cytidine(32) in tRNA + S-sulfanyl-L-cysteinyl-[cysteine desulfurase] + AH2 + ATP = 2-thiocytidine(32) in tRNA + L-cysteinyl-[cysteine desulfurase] + A + AMP + diphosphate + H(+). The protein operates within tRNA modification. Catalyzes the ATP-dependent 2-thiolation of cytidine in position 32 of tRNA, to form 2-thiocytidine (s(2)C32). The sulfur atoms are provided by the cysteine/cysteine desulfurase (IscS) system. This is tRNA-cytidine(32) 2-sulfurtransferase from Klebsiella pneumoniae subsp. pneumoniae (strain ATCC 700721 / MGH 78578).